The following is a 237-amino-acid chain: MRPSGRTPDQLRSLSIETGFTRHAEGSCLISFGDTRVLVTASLEERLPSWLRGKGQGWVTAEYGMLPRSTHSRTNREAARGKQSGRTQEIQRLIGRSLRAGIDLKKLGERQITIDCDVLQADGGTRTASISGGWVALRLAVNKLLASGQLTEDPIISQVAAVSCGISQGVPVLDLDYAEDSTAEADANFVMMGDSRLIEVQASAEGAPYDEEGLLRLLRLARMGCQQIFAEQKKAVA.

Residues R86 and 124 to 126 contribute to the phosphate site; that span reads GTR.

This sequence belongs to the RNase PH family. In terms of assembly, homohexameric ring arranged as a trimer of dimers.

The catalysed reaction is tRNA(n+1) + phosphate = tRNA(n) + a ribonucleoside 5'-diphosphate. Its function is as follows. Phosphorolytic 3'-5' exoribonuclease that plays an important role in tRNA 3'-end maturation. Removes nucleotide residues following the 3'-CCA terminus of tRNAs; can also add nucleotides to the ends of RNA molecules by using nucleoside diphosphates as substrates, but this may not be physiologically important. Probably plays a role in initiation of 16S rRNA degradation (leading to ribosome degradation) during starvation. The polypeptide is Ribonuclease PH (Zymomonas mobilis subsp. mobilis (strain ATCC 31821 / ZM4 / CP4)).